Consider the following 333-residue polypeptide: MMQHLFEKLFRAESMSQEESQQLFAAIVRGELEPSQLAAVLISMKVRGETPAEIAGAAQALLADAQHFPRPDYLFADIVGTGGDGTNSINISTASAFVAASCGVKVAKHGNRSVSSRSGSSDLLAAFGIRLDMSAEQSRLALDDLGVCFLFAPQYHTGFRHAMPVRQQLKTRTLFNVLGPLINPARPPLALIGVYSPELVLPIAQTLKVLGYQRAAVVHGGGMDEVAIHAPTQVAELNNGSIESYQLTPEDFGLNRYPLAALQGGMPEENRDILARLLQGKGETAHAAAVAANVALLLKLYGQENLRHNAQQALEMIHSGQAFDRVTALAARG.

5-phospho-alpha-D-ribose 1-diphosphate-binding positions include glycine 80, 83–84 (GD), serine 88, 90–93 (NIST), 108–116 (KHGNRSVSS), and serine 120. Glycine 80 contacts anthranilate. Mg(2+) is bound at residue serine 92. Anthranilate is bound at residue asparagine 111. Arginine 166 is an anthranilate binding site. Mg(2+) contacts are provided by aspartate 224 and glutamate 225.

The protein belongs to the anthranilate phosphoribosyltransferase family. Homodimer. Mg(2+) is required as a cofactor.

It carries out the reaction N-(5-phospho-beta-D-ribosyl)anthranilate + diphosphate = 5-phospho-alpha-D-ribose 1-diphosphate + anthranilate. It functions in the pathway amino-acid biosynthesis; L-tryptophan biosynthesis; L-tryptophan from chorismate: step 2/5. Functionally, catalyzes the transfer of the phosphoribosyl group of 5-phosphorylribose-1-pyrophosphate (PRPP) to anthranilate to yield N-(5'-phosphoribosyl)-anthranilate (PRA). The sequence is that of Anthranilate phosphoribosyltransferase from Yersinia pseudotuberculosis serotype O:1b (strain IP 31758).